Consider the following 303-residue polypeptide: Sulfate adenylyltransferase subunit 2 (303 aa).

Residues 281 to 303 (RQGRVIDHDSSGSMEKKKQEGYF) form a disordered region.

It belongs to the PAPS reductase family. CysD subfamily. As to quaternary structure, heterodimer composed of CysD, the smaller subunit, and CysN.

It catalyses the reaction sulfate + ATP + H(+) = adenosine 5'-phosphosulfate + diphosphate. Its pathway is sulfur metabolism; hydrogen sulfide biosynthesis; sulfite from sulfate: step 1/3. Functionally, with CysN forms the ATP sulfurylase (ATPS) that catalyzes the adenylation of sulfate producing adenosine 5'-phosphosulfate (APS) and diphosphate, the first enzymatic step in sulfur assimilation pathway. APS synthesis involves the formation of a high-energy phosphoric-sulfuric acid anhydride bond driven by GTP hydrolysis by CysN coupled to ATP hydrolysis by CysD. In Saccharophagus degradans (strain 2-40 / ATCC 43961 / DSM 17024), this protein is Sulfate adenylyltransferase subunit 2.